The following is a 327-amino-acid chain: Putative HTH-type transcriptional regulatory protein Mevan_1514 (327 aa).

An HTH cro/C1-type domain is found at 128-189; the sequence is LKETREKLNI…IKGINITDYF (62 aa). Positions 139–158 form a DNA-binding region, H-T-H motif; the sequence is VGELAEFSRVSRKTIYKYEQ.

The protein is Putative HTH-type transcriptional regulatory protein Mevan_1514 of Methanococcus vannielii (strain ATCC 35089 / DSM 1224 / JCM 13029 / OCM 148 / SB).